Here is a 53-residue protein sequence, read N- to C-terminus: Lantibiotic paenibacillin (53 aa).

The propeptide occupies 1-24; sequence MKVDQMFDLDLRKSYEASELSPQA. The residue at position 24 (Ala-24) is an N-acetylalanine. Ser-25 carries the post-translational modification 2,3-didehydroalanine (Ser). Thr-29 and Thr-30 each carry 2,3-didehydrobutyrine. The lanthionine (Ser-Cys) cross-link spans 34-38; that stretch reads SKAVC. Cross-links (beta-methyllanthionine (Thr-Cys)) lie at residues 40–43, 42–45, and 46–49; these read TLTC, TCIC, and TGSC. The segment at residues 48–52 is a cross-link (lanthionine (Ser-Cys)); that stretch reads SCSNC. At Ser-50 the chain carries 2,3-didehydroalanine (Ser).

In terms of processing, maturation of lantibiotics involves the enzymatic conversion of Thr, and Ser into dehydrated AA and the formation of thioether bonds with cysteine. This is followed by membrane translocation and cleavage of the modified precursor. Post-translationally, the structure of the 2,3-didehydrobutyrines is not discussed in PubMed:17071789.

It is found in the secreted. Functionally, lanthionine-containing peptide antibiotic (lantibiotic) active on Gram-positive bacteria. The bactericidal activity of lantibiotics is based on depolarization of energized bacterial cytoplasmic membranes, initiated by the formation of aqueous transmembrane pores. Lacks antibacterial activity against Gram-negative bacteria. This chain is Lantibiotic paenibacillin, found in Paenibacillus polymyxa (Bacillus polymyxa).